The chain runs to 359 residues: Type-1 angiotensin II receptor (359 aa).

Residues 1 to 25 (MILNSSTEDSIKRIQDDCPKAGRHN) are Extracellular-facing. N-linked (GlcNAc...) asparagine glycosylation is present at N4. Residues Q15 and D17 each contribute to the angiotensin II site. 2 disulfide bridges follow: C18–C274 and C101–C180. A helical transmembrane segment spans residues 26 to 55 (YIFVMIPTLYSIIFVVGIFGNSLVVIVIYF). At 56-61 (YMKLKT) the chain is on the cytoplasmic side. A helical membrane pass occupies residues 62–89 (VASVFLLNLALADLCFLLTLPLWAVYTA). Topologically, residues 90–98 (MEYRWPFGN) are extracellular. A helical membrane pass occupies residues 99–125 (YLCKIASASVSFNLYASVFLLTCLSID). At 126–141 (RYLAIVHPMKSRLRRT) the chain is on the cytoplasmic side. The chain crosses the membrane as a helical span at residues 142–165 (MLVAKVTCIIIWLLAGLASLPTII). Residues 166–190 (HRNVFFIENTNITVCAFHYESQNST) lie on the Extracellular side of the membrane. R167 lines the angiotensin II pocket. N176 carries N-linked (GlcNAc...) asparagine glycosylation. Positions 182, 183, and 184 each coordinate angiotensin II. Residue N188 is glycosylated (N-linked (GlcNAc...) asparagine). The helical transmembrane segment at 191–216 (LPVGLGLTKNILGFLFPFLIILTSYT) threads the bilayer. Residue K199 coordinates angiotensin II. Residues 217 to 239 (LIWKALKKAYEIQKNKPRNDDIF) lie on the Cytoplasmic side of the membrane. A helical membrane pass occupies residues 240–268 (KIIMAIVLFFFFSWVPHQIFTFLDVLIQL). Topologically, residues 269–278 (GIIHDCKIAD) are extracellular. Residues 279-304 (IVDTAMPITICLAYFNNCLNPLFYGF) traverse the membrane as a helical segment. The Cytoplasmic segment spans residues 305 to 359 (LGKKFKKYFLQLLKYIPPKAKSHSSLSTKMSTLSYRPSENGSSSTKKSAPCTEVE). The disordered stretch occupies residues 326-359 (SHSSLSTKMSTLSYRPSENGSSSTKKSAPCTEVE). Over residues 327-351 (HSSLSTKMSTLSYRPSENGSSSTKK) the composition is skewed to polar residues. Residue C355 is the site of S-palmitoyl cysteine attachment.

Belongs to the G-protein coupled receptor 1 family. As to quaternary structure, interacts with MAS1. Interacts with ARRB1. Interacts with FLNA (via filamin repeat 21); increases PKA-mediated phosphorylation of FLNA. Post-translationally, C-terminal Ser or Thr residues may be phosphorylated.

It is found in the cell membrane. Receptor for angiotensin II, a vasoconstricting peptide, which acts as a key regulator of blood pressure and sodium retention by the kidney. The activated receptor in turn couples to G-alpha proteins G(q) (GNAQ, GNA11, GNA14 or GNA15) and thus activates phospholipase C and increases the cytosolic Ca(2+) concentrations, which in turn triggers cellular responses such as stimulation of protein kinase C. This chain is Type-1 angiotensin II receptor (AGTR1), found in Sus scrofa (Pig).